Here is a 658-residue protein sequence, read N- to C-terminus: Exoribonuclease 2 (658 aa).

One can recognise an RNB domain in the interval 189-530 (REDLTSLYFT…VNHRLIKQVL (342 aa)). Residues 576-658 (AVEFDCEIAD…ETRSIVGNII (83 aa)) form the S1 motif domain.

It belongs to the RNR ribonuclease family. RNase II subfamily.

The protein localises to the cytoplasm. The catalysed reaction is Exonucleolytic cleavage in the 3'- to 5'-direction to yield nucleoside 5'-phosphates.. Its function is as follows. Involved in mRNA degradation. Hydrolyzes single-stranded polyribonucleotides processively in the 3' to 5' direction. The polypeptide is Exoribonuclease 2 (Actinobacillus pleuropneumoniae serotype 7 (strain AP76)).